A 123-amino-acid polypeptide reads, in one-letter code: Small ribosomal subunit protein eS25 (123 aa).

Residues 1–13 (MPPKKDTKGDSKK) show a composition bias toward basic and acidic residues. The segment at 1–34 (MPPKKDTKGDSKKGQKAKAGSGGGKAKKKKWSKG) is disordered. The span at 25 to 34 (KAKKKKWSKG) shows a compositional bias: basic residues.

The protein belongs to the eukaryotic ribosomal protein eS25 family.

This Branchiostoma belcheri (Amphioxus) protein is Small ribosomal subunit protein eS25 (RPS25).